A 174-amino-acid polypeptide reads, in one-letter code: MSLFRYNPRDYFYTSPMERFIVNLLDNTFDDRSSRPLHSVAPYWLHQPELNECNIGNTLGEVINEKDKFAVRADVSHFHPKELSVSVRDRELVIEGHHKERADSAGHGSIERHFIRKYVLPEEVQPDTIESHLSDKGVLTICANKTAVGTTASRNIPIRASPKEPEAKQKTKKQ.

One can recognise a sHSP domain in the interval 50–161 (LNECNIGNTL…ASRNIPIRAS (112 aa)). The segment at 153 to 174 (SRNIPIRASPKEPEAKQKTKKQ) is disordered. Positions 161-174 (SPKEPEAKQKTKKQ) are enriched in basic and acidic residues.

The protein belongs to the small heat shock protein (HSP20) family.

This Onchocerca volvulus protein is Small heat shock protein OV25-1 (OV25-1).